Reading from the N-terminus, the 544-residue chain is CTP synthase (544 aa).

An amidoligase domain region spans residues 1–266 (MATNYIFVTG…DDFVCDRFRL (266 aa)). Ser14 lines the CTP pocket. Residue Ser14 participates in UTP binding. Residues 15–20 (SLGKGI) and Asp72 contribute to the ATP site. Mg(2+) contacts are provided by Asp72 and Glu140. CTP is bound by residues 147 to 149 (DIE), 187 to 192 (KTKPTQ), and Lys223. UTP contacts are provided by residues 187 to 192 (KTKPTQ) and Lys223. 239 to 241 (KDV) is a binding site for ATP. In terms of domain architecture, Glutamine amidotransferase type-1 spans 291 to 542 (TIGMVGKYVE…VKAAKEHQGK (252 aa)). Gly352 is a binding site for L-glutamine. Catalysis depends on Cys379, which acts as the Nucleophile; for glutamine hydrolysis. L-glutamine contacts are provided by residues 380–383 (LGMQ), Glu403, and Arg470. Active-site residues include His515 and Glu517.

Belongs to the CTP synthase family. As to quaternary structure, homotetramer.

It catalyses the reaction UTP + L-glutamine + ATP + H2O = CTP + L-glutamate + ADP + phosphate + 2 H(+). The catalysed reaction is L-glutamine + H2O = L-glutamate + NH4(+). The enzyme catalyses UTP + NH4(+) + ATP = CTP + ADP + phosphate + 2 H(+). Its pathway is pyrimidine metabolism; CTP biosynthesis via de novo pathway; CTP from UDP: step 2/2. Its activity is regulated as follows. Allosterically activated by GTP, when glutamine is the substrate; GTP has no effect on the reaction when ammonia is the substrate. The allosteric effector GTP functions by stabilizing the protein conformation that binds the tetrahedral intermediate(s) formed during glutamine hydrolysis. Inhibited by the product CTP, via allosteric rather than competitive inhibition. In terms of biological role, catalyzes the ATP-dependent amination of UTP to CTP with either L-glutamine or ammonia as the source of nitrogen. Regulates intracellular CTP levels through interactions with the four ribonucleotide triphosphates. This is CTP synthase from Glaesserella parasuis serovar 5 (strain SH0165) (Haemophilus parasuis).